The chain runs to 111 residues: Ig kappa chain V-III region CBPC 101 (111 aa).

The interval 1–23 (DIVLTQSPASLAVSLGQRATISC) is framework-1. A disulfide bridge links Cys-23 with Cys-92. Residues 24 to 38 (KASQSVDYTGESYMN) are complementarity-determining-1. The segment at 39–53 (WYQQNPGQSPKLLIY) is framework-2. A complementarity-determining-2 region spans residues 54–60 (AASNLES). The tract at residues 61–92 (GIPARFSGSGSGTDFTLNIHPVEEEDAATYYC) is framework-3. The tract at residues 93 to 101 (QQSNEDPYT) is complementarity-determining-3. Positions 102–111 (FGGGTKLEIK) are framework-4.

This Mus musculus (Mouse) protein is Ig kappa chain V-III region CBPC 101.